Reading from the N-terminus, the 412-residue chain is Inositol polyphosphate-5-phosphatase A (412 aa).

Residue cysteine 409 is the site of S-farnesyl cysteine attachment. Residues 410-412 (VVQ) constitute a propeptide, removed in mature form.

It belongs to the inositol 1,4,5-trisphosphate 5-phosphatase type I family. As to quaternary structure, interacts with TASOR. Isoprenylation at Cys-409 is required for localization at the membrane. Predominantly expressed in heart, brain, and skeletal muscle. In brain; high level in Purkinje cells.

It is found in the cell membrane. Its subcellular location is the cell projection. It localises to the dendrite. It carries out the reaction 1D-myo-inositol 1,4,5-trisphosphate + H2O = 1D-myo-inositol 1,4-bisphosphate + phosphate. The enzyme catalyses 1D-myo-inositol 1,3,4,5-tetrakisphosphate + H2O = 1D-myo-inositol 1,3,4-trisphosphate + phosphate. Functionally, phosphatase that specifically hydrolyzes the 5-phosphate of inositol 1,4,5-trisphosphate to inositol 1,4-bisphosphate, and inositol 1,3,4,5-tetrasphosphate to inositol 1,3,4-trisphosphate. Plays a crucial role in the survival of cerebellar Purkinje cells. This is Inositol polyphosphate-5-phosphatase A from Homo sapiens (Human).